The sequence spans 224 residues: UPF0758 protein VIBHAR_00653 (224 aa).

One can recognise an MPN domain in the interval 102–224 (ALTSPEQTKL…SVSFAERGWI (123 aa)). Zn(2+) contacts are provided by His173, His175, and Asp186. Positions 173-186 (HNHPSGVAEPSQAD) match the JAMM motif motif.

This sequence belongs to the UPF0758 family.

In Vibrio campbellii (strain ATCC BAA-1116), this protein is UPF0758 protein VIBHAR_00653.